The sequence spans 625 residues: Putative xanthine/uracil permease C887.17 (625 aa).

10 consecutive transmembrane segments (helical) span residues 49–69 (AGLT…TILV), 107–127 (AAIS…PVGM), 154–174 (EALL…VIGL), 192–212 (AGIG…LGVI), 246–263 (MWVG…LMMY), 328–348 (FAIA…GTLY), 369–389 (VAYI…CSPV), 406–426 (GILG…APIF), 429–449 (IPVW…MKST), and 465–485 (ITIA…AGII). Residues 595-625 (EAVGESESFSNRQQDFRTPYAGIDMDTDDRI) form a disordered region.

Belongs to the nucleobase:cation symporter-2 (NCS2) (TC 2.A.40) family. Azg-like subfamily.

The protein resides in the golgi apparatus membrane. In Schizosaccharomyces pombe (strain 972 / ATCC 24843) (Fission yeast), this protein is Putative xanthine/uracil permease C887.17.